Consider the following 617-residue polypeptide: Translation initiation factor IF-2 (617 aa).

Over residues 1 to 11 (MSKHKPRHFQK) the composition is skewed to basic residues. The interval 1–25 (MSKHKPRHFQKNKFDNRAKTSAKQQ) is disordered. Residues 119–288 (PRPPIVTIMG…ILLVAEVEDY (170 aa)) enclose the tr-type G domain. Residues 128-135 (GHVDHGKT) are G1. 128-135 (GHVDHGKT) contacts GTP. The tract at residues 153–157 (GITQK) is G2. A G3 region spans residues 175–178 (DTPG). GTP-binding positions include 175-179 (DTPGH) and 229-232 (NKMD). The segment at 229 to 232 (NKMD) is G4. Residues 265–267 (SAL) are G5.

Belongs to the TRAFAC class translation factor GTPase superfamily. Classic translation factor GTPase family. IF-2 subfamily.

The protein localises to the cytoplasm. Its function is as follows. One of the essential components for the initiation of protein synthesis. Protects formylmethionyl-tRNA from spontaneous hydrolysis and promotes its binding to the 30S ribosomal subunits. Also involved in the hydrolysis of GTP during the formation of the 70S ribosomal complex. This Mycoplasma pneumoniae (strain ATCC 29342 / M129 / Subtype 1) (Mycoplasmoides pneumoniae) protein is Translation initiation factor IF-2 (infB).